The sequence spans 389 residues: Na(+)/H(+) antiporter NhaA (389 aa).

The next 11 helical transmembrane spans lie at 14 to 34, 59 to 79, 95 to 115, 124 to 144, 154 to 174, 177 to 197, 213 to 233, 257 to 277, 292 to 312, 328 to 348, and 363 to 383; these read AGGI…NSPL, LILW…GLEV, SLPT…YLLF, AGWA…MALL, VFLL…IALF, TDLS…LVGL, LILW…GVII, PWST…VYVG, IALG…YIAV, IAPV…IASL, and LGTL…LSKV.

This sequence belongs to the NhaA Na(+)/H(+) (TC 2.A.33) antiporter family.

Its subcellular location is the cell inner membrane. The catalysed reaction is Na(+)(in) + 2 H(+)(out) = Na(+)(out) + 2 H(+)(in). Na(+)/H(+) antiporter that extrudes sodium in exchange for external protons. The sequence is that of Na(+)/H(+) antiporter NhaA from Shewanella baltica (strain OS195).